The following is an 88-amino-acid chain: ATP synthase epsilon chain (88 aa).

The protein belongs to the ATPase epsilon chain family. In terms of assembly, F-type ATPases have 2 components, CF(1) - the catalytic core - and CF(0) - the membrane proton channel. CF(1) has five subunits: alpha(3), beta(3), gamma(1), delta(1), epsilon(1). CF(0) has three main subunits: a, b and c.

Its subcellular location is the cell inner membrane. Its function is as follows. Produces ATP from ADP in the presence of a proton gradient across the membrane. The chain is ATP synthase epsilon chain (atpC) from Chlorobium limicola.